The chain runs to 47 residues: TPEHQRYIELFLVVDHGMFMKYNGNSDKIYYYIHQMVNIMKXAYXYL.

Residues 6–47 form the Peptidase M12B domain; the sequence is RYIELFLVVDHGMFMKYNGNSDKIYYYIHQMVNIMKXAYXYL. Position 9 (E9) interacts with Ca(2+).

The protein belongs to the venom metalloproteinase (M12B) family. Monomer. It depends on Zn(2+) as a cofactor. As to expression, expressed by the venom gland.

It is found in the secreted. Its activity is regulated as follows. Inhibited by 1,10-phenanthroline and EDTA. Functionally, the metalloproteinase is a probable venom zinc protease that induces local hemorrhage in the skin of rats. Degrades type-IV collagen, gelatin, laminin and fibronectin. Has fibrinolytic activities. Has high hemagglutinating activity on red blood cells. Cleaves insulin B chain at 29-His-|-Leu-30, and 38-Ala-|-Leu-39 bonds. The chain is Snake venom metalloproteinase jararafibrase-4 from Bothrops jararaca (Jararaca).